We begin with the raw amino-acid sequence, 401 residues long: Dynactin subunit 2 (401 aa).

The disordered stretch occupies residues 1–25 (MADPKYADLPGIARNEPDVYETSDL). Position 2 is an N-acetylalanine (Ala-2). A Phosphotyrosine modification is found at Tyr-6. Residue Ser-83 is modified to Phosphoserine. Residue Tyr-86 is modified to Phosphotyrosine. Positions 99–132 (PQQKYQRLLHEVQELTTEVEKIKTTVKESATEEK) form a coiled coil. Residues Thr-134 and Thr-198 each carry the phosphothreonine modification. Residues 214-244 (EQDKFSQAAKVAELEKRLTELETAVRCDQDA) are a coiled coil. Phosphoserine is present on Ser-320. Residues 379 to 399 (RENLATVEGNFASIDERMKKL) adopt a coiled-coil conformation.

This sequence belongs to the dynactin subunit 2 family. Subunit of dynactin, a multiprotein complex part of a tripartite complex with dynein and a adapter, such as BICDL1, BICD2 or HOOK3. The dynactin complex is built around ACTR1A/ACTB filament and consists of an actin-related filament composed of a shoulder domain, a pointed end and a barbed end. Its length is defined by its flexible shoulder domain. The soulder is composed of 2 DCTN1 subunits, 4 DCTN2 and 2 DCTN3. The 4 DCNT2 (via N-terminus) bind the ACTR1A filament and act as molecular rulers to determine the length. The pointed end is important for binding dynein-dynactin cargo adapters and consists of 4 subunits: ACTR10, DCNT4, DCTN5 and DCTN6. The barbed end is composed of a CAPZA1:CAPZB heterodimers, which binds ACTR1A/ACTB filament and dynactin and stabilizes dynactin. Interacts with BICD2 and CEP135. Interacts with DYNAP. Interacts with ECPAS. Interacts with MAPRE1.

The protein resides in the cytoplasm. Its subcellular location is the cytoskeleton. It is found in the microtubule organizing center. It localises to the centrosome. The protein localises to the membrane. Its function is as follows. Part of the dynactin complex that activates the molecular motor dynein for ultra-processive transport along microtubules. In the dynactin soulder domain, binds the ACTR1A filament and acts as a molecular ruler to determine the length. Modulates cytoplasmic dynein binding to an organelle, and plays a role in prometaphase chromosome alignment and spindle organization during mitosis. Involved in anchoring microtubules to centrosomes. May play a role in synapse formation during brain development. This chain is Dynactin subunit 2, found in Homo sapiens (Human).